We begin with the raw amino-acid sequence, 284 residues long: Protein-S-isoprenylcysteine O-methyltransferase (284 aa).

Residues 1 to 16 (MAGCAARAPPGSEARL) are Cytoplasmic-facing. The helical transmembrane segment at 17 to 33 (SLATFLLGASVLALPLL) threads the bilayer. Over 34–41 (TRAGLQGR) the chain is Lumenal. The chain crosses the membrane as a helical span at residues 42 to 59 (TGLALYVAGLNALLLLLY). Topologically, residues 60–69 (RPPRYQIAIR) are cytoplasmic. Residues 70–87 (ACFLGFVFGCGTLLSFSQ) form a helical membrane-spanning segment. Topologically, residues 88–92 (SSWSH) are lumenal. A helical membrane pass occupies residues 93–112 (FGWYMCSLSLFHYSEYLVTA). Over 113–131 (VNNPKSLSLDSFLLNHSLE) the chain is Cytoplasmic. A helical membrane pass occupies residues 132–149 (YTVAALSSWLEFTLENIF). Over 150-154 (WPELK) the chain is Lumenal. Residues 155-174 (QITWLSVTGLLMVVFGECLR) form a helical membrane-spanning segment. Residues 175-212 (KAAMFTAGSNFNHVVQNEKSDTHTLVTSGVYAWFRHPS) are Cytoplasmic-facing. S-adenosyl-L-methionine-binding positions include Gln190, 197-200 (HTLV), Tyr205, and 210-213 (HPSY). The chain crosses the membrane as a helical span at residues 213–228 (YVGWFYWSIGTQVMLC). A topological domain (lumenal) is located at residue Asn229. The helical transmembrane segment at 230–244 (PICGVSYALTVWRFF) threads the bilayer. The Cytoplasmic portion of the chain corresponds to 245-284 (RDRTEEEEISLIHFFGEEYLEYKKRVPTGLPFIKGVKVDL). Residue Arg247 participates in substrate binding. Glu251 contacts S-adenosyl-L-methionine.

It belongs to the class VI-like SAM-binding methyltransferase superfamily. Isoprenylcysteine carboxyl methyltransferase family. Ubiquitously expressed. Expressed at higher levels in the cerebellum and putamen than in other brain regions. Abundant expression seen in the Purkinje cells and pontine neurons.

The protein localises to the endoplasmic reticulum membrane. It catalyses the reaction [protein]-C-terminal S-[(2E,6E)-farnesyl]-L-cysteine + S-adenosyl-L-methionine = [protein]-C-terminal S-[(2E,6E)-farnesyl]-L-cysteine methyl ester + S-adenosyl-L-homocysteine. Competitively inhibited by N-acetyl-S-trans,trans-farnesyl-l-cysteine (AFC). In terms of biological role, catalyzes the post-translational methylation of isoprenylated C-terminal cysteine residues. In Homo sapiens (Human), this protein is Protein-S-isoprenylcysteine O-methyltransferase (ICMT).